A 396-amino-acid chain; its full sequence is Lipid-A-disaccharide synthase (396 aa).

The protein belongs to the LpxB family.

The catalysed reaction is a lipid X + a UDP-2-N,3-O-bis[(3R)-3-hydroxyacyl]-alpha-D-glucosamine = a lipid A disaccharide + UDP + H(+). It functions in the pathway bacterial outer membrane biogenesis; LPS lipid A biosynthesis. Its function is as follows. Condensation of UDP-2,3-diacylglucosamine and 2,3-diacylglucosamine-1-phosphate to form lipid A disaccharide, a precursor of lipid A, a phosphorylated glycolipid that anchors the lipopolysaccharide to the outer membrane of the cell. This chain is Lipid-A-disaccharide synthase, found in Nitrobacter hamburgensis (strain DSM 10229 / NCIMB 13809 / X14).